Here is a 644-residue protein sequence, read N- to C-terminus: DNA mismatch repair protein MutL (644 aa).

It belongs to the DNA mismatch repair MutL/HexB family.

In terms of biological role, this protein is involved in the repair of mismatches in DNA. It is required for dam-dependent methyl-directed DNA mismatch repair. May act as a 'molecular matchmaker', a protein that promotes the formation of a stable complex between two or more DNA-binding proteins in an ATP-dependent manner without itself being part of a final effector complex. This chain is DNA mismatch repair protein MutL, found in Chlorobium chlorochromatii (strain CaD3).